Here is a 148-residue protein sequence, read N- to C-terminus: Single-stranded DNA-binding protein 2 (148 aa).

Residues 6–108 (MNHITVSGLV…IEAESFGHDL (103 aa)) form the SSB domain.

In terms of assembly, homotetramer.

The polypeptide is Single-stranded DNA-binding protein 2 (ssb2) (Tropheryma whipplei (strain TW08/27) (Whipple's bacillus)).